A 253-amino-acid chain; its full sequence is 5'-nucleotidase SurE 2 (253 aa).

A divalent metal cation-binding residues include D8, D9, S39, and N92.

This sequence belongs to the SurE nucleotidase family. A divalent metal cation is required as a cofactor.

It is found in the cytoplasm. It catalyses the reaction a ribonucleoside 5'-phosphate + H2O = a ribonucleoside + phosphate. Nucleotidase that shows phosphatase activity on nucleoside 5'-monophosphates. The chain is 5'-nucleotidase SurE 2 from Burkholderia lata (strain ATCC 17760 / DSM 23089 / LMG 22485 / NCIMB 9086 / R18194 / 383).